A 1039-amino-acid chain; its full sequence is Serine/threonine-protein kinase Tao (1039 aa).

The Protein kinase domain maps to 27–280 (FEDLREIGHG…SAKLLTHAYV (254 aa)). Residues 33–41 (IGHGSFGAV) and Lys-56 contribute to the ATP site. The Proton acceptor role is filled by Asp-150. 4 disordered regions span residues 324–457 (SAVG…NSAS), 485–508 (GGGGTGTGGSGGGSPASGGPLADR), 629–648 (HQQDVERRAKQTSAAEKKLH), and 677–707 (WKRELSMDESTPKRQRDLTLQSQKDNLKQHE). Residues 341–350 (SSKSNSITSE) show a composition bias toward polar residues. Residues 359 to 376 (SAASSQSSSSNSIPAAAQ) are compositionally biased toward low complexity. Over residues 377–387 (NHHHIAAHHHQ) the composition is skewed to basic residues. Low complexity-rich tracts occupy residues 388-397 (QAASAAVAAA) and 413-429 (PSGQQGQPVPPGAVSRN). A compositionally biased stretch (polar residues) spans 444–454 (HSMNNNVTPTN). The segment covering 485–500 (GGGGTGTGGSGGGSPA) has biased composition (gly residues). Coiled-coil stretches lie at residues 631–765 (QDVE…MLLK) and 835–993 (KQFR…DNES). The segment covering 677-693 (WKRELSMDESTPKRQRD) has biased composition (basic and acidic residues).

This sequence belongs to the protein kinase superfamily. STE Ser/Thr protein kinase family. STE20 subfamily. As to quaternary structure, interacts with Schip1; the interaction enhances Tao kinase activity. Mg(2+) serves as cofactor. Autophosphorylated. As to expression, in the posterior midgut, expressed in almost all intestinal cell types including intestinal stem cells and enterocytes (at protein level). Maternally expressed, ubiquitously distributed in the egg and early embryo and enriched in the germ plasm at the posterior pole of the early embryo including the pole cells.

The protein localises to the cytoplasm. Its subcellular location is the cytoskeleton. It is found in the spindle. It localises to the membrane. The protein resides in the perikaryon. The protein localises to the cell cortex. Its subcellular location is the cell projection. It is found in the axon. It carries out the reaction L-seryl-[protein] + ATP = O-phospho-L-seryl-[protein] + ADP + H(+). The enzyme catalyses L-threonyl-[protein] + ATP = O-phospho-L-threonyl-[protein] + ADP + H(+). Functionally, serine/threonine-protein kinase which regulates the Hippo/SWH (Sav/Wts/Hpo) signaling pathway, a signaling pathway that plays a pivotal role in organ size control and tumor suppression by restricting proliferation and promoting apoptosis. The core of this pathway is composed of a kinase cascade wherein Hippo (hpo), in complex with its regulatory protein Salvador (sav), phosphorylates and activates Warts (wts) in complex with its regulatory protein Mats, which in turn phosphorylates and inactivates the Yorkie (yki) oncoprotein. In imaginal cells, phosphorylates and activates hpo and leads to repression of yki. In the midgut, negatively regulates the proliferation of intestinal stem cells through the Hippo/SWH pathway. Independent of the hippo/SWH pathway, regulates epithelial morphogenesis in follicle cells by promoting the endocytosis of Fas2 and reducing lateral adhesion between epithelial cells which, in turn, permits shrinking of the lateral membrane and initiates morphogenesis of the squamous epithelium. Required for the development of both the mushroom body and the ellipsoid body in the brain and may act as a negative regulator of the par-1 kinase. Negatively regulates the JNK pathway which increases sensitivity to ethanol exposure. Plays a role in the control of cell shape by negatively regulating the growth of microtubule plus-ends as they contact the actin-rich cell cortex. Required for the induction of apoptosis in pole cells by promoting expression of skl which enhances activity of the apoptosis activator hid. In terms of biological role, induces in vitro expression of large, highly dynamic, microtubule-dependent lamellopodia-like cytoplasmic expansions which constantly probe the environment. Induces in vitro expression of actin-dependent filopodia-like cytoplasmic protrusions which firmly attach to the substrate. Antagonizes the activity of isoform D. In Drosophila melanogaster (Fruit fly), this protein is Serine/threonine-protein kinase Tao.